The primary structure comprises 230 residues: uncharacterized protein (230 aa).

Residues 7-23 traverse the membrane as a helical segment; it reads LFTASILSLGYLVFICG. Positions 27–230 are disordered; the sequence is KPKPTASTES…VKTEGTLKKN (204 aa). A compositionally biased stretch (low complexity) spans 50-59; sequence AVPQKPAAPA. The span at 60–83 shows a compositional bias: basic and acidic residues; sequence AEEKAPVDPKDPKSKDVDEAKKPD. Residues 101 to 112 show a composition bias toward basic residues; sequence KKSKKSEKSKKK. Residues 113–173 are compositionally biased toward basic and acidic residues; it reads KTEEKVMSED…KEKSKDETVP (61 aa). Acidic residues predominate over residues 199–210; the sequence is ETDEFPTIDEDA. The span at 211-230 shows a compositional bias: basic and acidic residues; it reads EKTKKTEKKDVKTEGTLKKN.

It localises to the membrane. This is an uncharacterized protein from Caenorhabditis elegans.